The following is a 757-amino-acid chain: DNA endonuclease RBBP8 (757 aa).

Residues 22-45 (DLWTKLKEYHDKETQGLQVKVTKL) are essential for binding to the MRN complex and for RPA focus formation on DNA damage. A coiled-coil region spans residues 35-84 (TQGLQVKVTKLKKERILDAQRLEEFFTKNQQLREQQKVLHETIKVLEDRL). The tract at residues 45 to 160 (LKKERILDAQ…TDLESEEDVI (116 aa)) is required for interaction with LMO4, probably by stabilizing the interaction through RPPB8 dimerization. Residues Lys62 and Lys115 each participate in a glycyl lysine isopeptide (Lys-Gly) (interchain with G-Cter in SUMO2) cross-link. Residues 117–138 (ITELMNEKNTLQEENKKLSEQL) adopt a coiled-coil conformation. Lys193 participates in a covalent cross-link: Glycyl lysine isopeptide (Lys-Gly) (interchain with G-Cter in SUMO2). The residue at position 272 (Ser272) is a Phosphoserine. Thr309 is subject to Phosphothreonine. A phosphoserine mark is found at Ser320, Ser321, and Ser343. The interval 348–375 (GKKTHLKTVPLSNTSAPGPEKPRSKSED) is disordered. Residues Lys354 and Lys372 each participate in a glycyl lysine isopeptide (Lys-Gly) (interchain with G-Cter in SUMO2) cross-link. The residue at position 373 (Ser373) is a Phosphoserine. Residues Lys390, Lys399, and Lys405 each participate in a glycyl lysine isopeptide (Lys-Gly) (interchain with G-Cter in SUMO2) cross-link. Residues 407–417 (TSEPISEQGNI) are compositionally biased toward polar residues. A disordered region spans residues 407–430 (TSEPISEQGNIGHSKDTDRDKHVV). Residues 419–429 (HSKDTDRDKHV) show a composition bias toward basic and acidic residues. Glycyl lysine isopeptide (Lys-Gly) (interchain with G-Cter in SUMO2) cross-links involve residues Lys433 and Lys443. The PXDLS motif stretch occupies residues 484–488 (PLDLS). The PXDLS motif signature appears at 484-488 (PLDLS). Residues 503 to 551 (CENSKIRFRQVTLYEALKPIPRDSSSSRKALSGSCGLTKDSPEEPCLQE) are damage-recruitment motif. Lys520 participates in a covalent cross-link: Glycyl lysine isopeptide (Lys-Gly) (interchain with G-Cter in SUMO2); alternate. A disordered region spans residues 524 to 544 (RDSSSSRKALSGSCGLTKDSP). Residues Lys564 and Lys570 each participate in a glycyl lysine isopeptide (Lys-Gly) (interchain with G-Cter in SUMO2) cross-link. Residue Lys596 forms a Glycyl lysine isopeptide (Lys-Gly) (interchain with G-Cter in SUMO2); alternate linkage. Glycyl lysine isopeptide (Lys-Gly) (interchain with G-Cter in SUMO2) cross-links involve residues Lys605, Lys630, and Lys632. Residues 633-677 (SLQNNQDVSFENIQWSIDPGADLSQYKMGVTVDDTKDGSQSRLAG) form a required for interaction with LMO4, probably by making physical contact with LMO4 region. Phosphoserine; by ATM is present on Ser656. Residue Lys668 forms a Glycyl lysine isopeptide (Lys-Gly) (interchain with G-Cter in SUMO2) linkage. Ser671 carries the post-translational modification Phosphoserine. Residues 696 to 728 (KKQEQKGEESPNGERKMNDSLEDMFDRTTHEEY) are compositionally biased toward basic and acidic residues. A disordered region spans residues 696 to 757 (KKQEQKGEES…TTTKKPNISW (62 aa)). Residue Lys711 forms a Glycyl lysine isopeptide (Lys-Gly) (interchain with G-Cter in SUMO2) linkage. Ser715 is subject to Phosphoserine. The segment covering 747 to 757 (STTTKKPNISW) has biased composition (polar residues).

Belongs to the COM1/SAE2/CtIP family. Homotetramer; formed by antiparallel association of helical extensions protruding from the N-termini of two parallel coiled-coil dimers. Forms a dumbbell-shaped particle in which polar globular domains are held about 30 nm apart by a central rod. Homotetramerization is required for DNA-end resection and repair. Interacts (via the PXDLS motif) with CTBP1; the interaction is disrupted via binding of the adenovirus E1A to CTBP1. Component of the BRCA1-RBBP8 complex. Interacts (the Ser-321 phosphorylated form) with BRCA1 (via the C-terminal BRCT domains): the interaction occurs in the G2 phase, ubiquitinates RBBP8 and involves RBBP8 in BRCA1-dependent G2/M checkpoint control on DNA damage. Interacts with RB1. Interacts with the MRN complex. Interacts directly with MRE11; the interaction is required for efficient homologous recombination (HR) and regulation of the MRN complex. Interacts directly with RAD50. Interacts (when phosphorylated by CDK1) with NBN; promoting association with the MRN complex. Interacts with LMO4 (via the LIM zinc-binding 1 domain). Interacts with SIAH1. Interacts with RNF138. Interacts with EXD2. Interacts with CUL3 and KLHL15; this interaction leads to RBBP8 proteasomal degradation. Directly interacts with PIN1; this interaction depends upon RBBP8 phosphorylation, predominantly at Thr-309. Interacts with FZR1; this interaction leads to APC/C-mediated RBBP8 proteasomal degradation. Interacts with AUNIP; leading to recruit RBBP8 to sites of DNA damage. Interacts with SAMHD1. Interacts with HDGFL2. Hyperphosphorylation upon ionizing radiation results in dissociation from BRCA1. Phosphorylation by CDK1 is essential for the recruitment to DNA and the DNA repair function. Phosphorylated on Ser-321 as cells enter G2 phase. This phosphorylation is required for binding BRCA1 and for the G2/M DNA damage transition checkpoint control. Phosphorylation at Thr-309, probably catalyzed by CDK2, is required for PIN1-binding, while phosphorylation at Ser-272 serves as a PIN1 isomerization site. Phosphorylation at Thr-309 is cell-cycle dependent. It steadily increases during S phase, peaks at late S/G2 phase, and drops at G1. Phosphorylation is not required for tetramerization. Binds to DNA more strongly when dephosphorylated. In terms of processing, ubiquitinated. Ubiquitination at multiple sites by BRCA1 (via its N-terminal RING domain) does not lead to its proteasomal degradation but instead the ubiquitinated RBBP8 binds to chromatin following DNA damage and may play a role in G2/M checkpoint control. Ubiquitinated by RNF138 at its N-terminus. Ubiquitinated through 'Lys-48' by the E3 CUL3-KLHL15 complex; this modification leads to proteasomal degradation. Ubiquitinated by the E3 FZR1/APC/C complex; this modification leads to proteasomal degradation.

The protein localises to the nucleus. It localises to the chromosome. Functionally, endonuclease that cooperates with the MRE11-RAD50-NBN (MRN) complex in DNA-end resection, the first step of double-strand break (DSB) repair through the homologous recombination (HR) pathway. HR is restricted to S and G2 phases of the cell cycle and preferentially repairs DSBs resulting from replication fork collapse. Key determinant of DSB repair pathway choice, as it commits cells to HR by preventing classical non-homologous end-joining (NHEJ). Specifically promotes the endonuclease activity of the MRN complex to clear DNA ends containing protein adducts: recruited to DSBs by NBN following phosphorylation by CDK1, and promotes the endonuclease activity of MRE11 to clear protein-DNA adducts and generate clean double-strand break ends. Functions downstream of the MRN complex and ATM, promotes ATR activation and its recruitment to DSBs in the S/G2 phase facilitating the generation of ssDNA. Component of the BRCA1-RBBP8 complex that regulates CHEK1 activation and controls cell cycle G2/M checkpoints on DNA damage. During immunoglobulin heavy chain class-switch recombination, promotes microhomology-mediated alternative end joining (A-NHEJ) and plays an essential role in chromosomal translocations. Binds preferentially to DNA Y-junctions and to DNA substrates with blocked ends and promotes intermolecular DNA bridging. The sequence is that of DNA endonuclease RBBP8 (RBBP8) from Bos taurus (Bovine).